An 81-amino-acid polypeptide reads, in one-letter code: GAMMA-ctenitoxin-Pn1a (81 aa).

Positions 1 to 16 are cleaved as a signal peptide; it reads MKVAIVFLSLLVLAFA. A propeptide spanning residues 17-34 is cleaved from the precursor; sequence SESIEENREEFPVEESAR. Cystine bridges form between Cys-35/Cys-49, Cys-42/Cys-55, Cys-46/Cys-81, Cys-48/Cys-65, and Cys-57/Cys-63.

This sequence belongs to the neurotoxin 03 (Tx2) family. 05 subfamily. In terms of tissue distribution, expressed by the venom gland.

It is found in the secreted. In terms of biological role, this insecticidal neurotoxin targets two types of channels/receptors. It reversibly inhibits the N-methyl-D-aspartate (NMDA)-subtype of ionotropic glutamate receptor (GRIN). It inhibits glutamate uptake from rat brain synaptosomes, and blocks GRIN in hippocampal slices. It also acts on sodium channels of both insects and mammals. On sodium channel insects, it strongly slows down channel inactivation (EC(50)=212.5 nM) and causes an increase (105%) in peak amplitude (at 1 uM) of B.germanica sodium channel (Nav), whereas it inhibits all mammalien sodium channels tested with the following order of potency: Nav1.3/SCN3A (IC(50)=1.5 uM) &gt; Nav1.6/SCN8A &gt; Nav1.5/SCN5A &gt; Nav1.4/SCN4A &gt;= Nav1.2/SCN2A. In vivo, it is highly toxic to house fly (Musca domestica), cockroach (Periplaneta americana), and cricket (Acheta domesticus). In different rat pain models (induced by PGE2, carrageenan or glutamate), it shows antinociceptive effect that may be related to an inhibitory activity on the glutamatergic system. This is GAMMA-ctenitoxin-Pn1a from Phoneutria nigriventer (Brazilian armed spider).